The chain runs to 406 residues: Phosphorylase b kinase gamma catalytic chain, liver/testis isoform (406 aa).

One can recognise a Protein kinase domain in the interval 24 to 291 (YDPKDVIGRG…AEQALQHPFF (268 aa)). Residues 30–38 (IGRGVSSVV) and Lys-53 each bind ATP. The Proton acceptor role is filled by Asp-153. A calmodulin-binding (domain-N) region spans residues 306 to 330 (QRFRVAVWTVLAAGRVALSTHRVRP). A Phosphoserine modification is found at Ser-345. The segment at 346–370 (VRHLIDNCAFRLYGHWVKKGEQQNR) is calmodulin-binding (domain-C).

The protein belongs to the protein kinase superfamily. CAMK Ser/Thr protein kinase family. In terms of assembly, hexadecamer of 4 heterotetramers, each composed of alpha, beta, gamma, and delta subunits. Alpha (PHKA1 or PHKA2) and beta (PHKB) are regulatory subunits, gamma (PHKG1 or PHKG2) is the catalytic subunit, and delta is calmodulin.

It catalyses the reaction 2 ATP + phosphorylase b = 2 ADP + phosphorylase a.. In terms of biological role, catalytic subunit of the phosphorylase b kinase (PHK), which mediates the neural and hormonal regulation of glycogen breakdown (glycogenolysis) by phosphorylating and thereby activating glycogen phosphorylase. May regulate glycogeneolysis in the testis. In vitro, phosphorylates PYGM. In Homo sapiens (Human), this protein is Phosphorylase b kinase gamma catalytic chain, liver/testis isoform (PHKG2).